Here is a 160-residue protein sequence, read N- to C-terminus: ATP synthase subunit b (160 aa).

A helical transmembrane segment spans residues 5-27 (IEQILTQIIAFLIMLGVLKKFVW).

Belongs to the ATPase B chain family. As to quaternary structure, F-type ATPases have 2 components, F(1) - the catalytic core - and F(0) - the membrane proton channel. F(1) has five subunits: alpha(3), beta(3), gamma(1), delta(1), epsilon(1). F(0) has three main subunits: a(1), b(2) and c(10-14). The alpha and beta chains form an alternating ring which encloses part of the gamma chain. F(1) is attached to F(0) by a central stalk formed by the gamma and epsilon chains, while a peripheral stalk is formed by the delta and b chains.

It localises to the cell inner membrane. Functionally, f(1)F(0) ATP synthase produces ATP from ADP in the presence of a proton or sodium gradient. F-type ATPases consist of two structural domains, F(1) containing the extramembraneous catalytic core and F(0) containing the membrane proton channel, linked together by a central stalk and a peripheral stalk. During catalysis, ATP synthesis in the catalytic domain of F(1) is coupled via a rotary mechanism of the central stalk subunits to proton translocation. In terms of biological role, component of the F(0) channel, it forms part of the peripheral stalk, linking F(1) to F(0). This Protochlamydia amoebophila (strain UWE25) protein is ATP synthase subunit b.